The chain runs to 109 residues: Putative pterin-4-alpha-carbinolamine dehydratase (109 aa).

It belongs to the pterin-4-alpha-carbinolamine dehydratase family.

It catalyses the reaction (4aS,6R)-4a-hydroxy-L-erythro-5,6,7,8-tetrahydrobiopterin = (6R)-L-erythro-6,7-dihydrobiopterin + H2O. The sequence is that of Putative pterin-4-alpha-carbinolamine dehydratase from Vibrio cholerae serotype O1 (strain ATCC 39315 / El Tor Inaba N16961).